An 835-amino-acid chain; its full sequence is Phenylalanine--tRNA ligase beta subunit (835 aa).

One can recognise a tRNA-binding domain in the interval 44-160 (PETTGPLVFG…SYGEPGEDAR (117 aa)). A B5 domain is found at 419–494 (PAMQPITMKV…RLEGLEAIPT (76 aa)). Residues D472, D478, E481, and E482 each contribute to the Mg(2+) site. An FDX-ACB domain is found at 741–834 (SSFPALHQDI…AKEKFNAEMR (94 aa)).

Belongs to the phenylalanyl-tRNA synthetase beta subunit family. Type 1 subfamily. Tetramer of two alpha and two beta subunits. It depends on Mg(2+) as a cofactor.

It localises to the cytoplasm. The enzyme catalyses tRNA(Phe) + L-phenylalanine + ATP = L-phenylalanyl-tRNA(Phe) + AMP + diphosphate + H(+). This is Phenylalanine--tRNA ligase beta subunit from Corynebacterium glutamicum (strain ATCC 13032 / DSM 20300 / JCM 1318 / BCRC 11384 / CCUG 27702 / LMG 3730 / NBRC 12168 / NCIMB 10025 / NRRL B-2784 / 534).